The primary structure comprises 40 residues: Cytolysin SmT-1 (40 aa).

The segment at 3–12 (ALAGTIIAGA) is plays an important role in the hemolytic activity. Residues 11 to 30 (GASLGFQILDKVLGELGKVS) form an N-terminal region region.

The protein belongs to the actinoporin family. Sea anemone subfamily. As to quaternary structure, octamer or nonamer in membranes. Monomer in the soluble state.

The protein resides in the secreted. It is found in the nematocyst. It localises to the target cell membrane. Pore-forming protein that forms cations-selective hydrophilic pores of around 1 nm and causes cardiac stimulation and cytolysis. Pore formation is a multi-step process that involves specific recognition of membrane sphingomyelin (but neither cholesterol nor phosphatidylcholine) using aromatic rich region and adjacent phosphocholine (POC) binding site, firm binding to the membrane (mainly driven by hydrophobic interactions) accompanied by the transfer of the N-terminal region to the lipid-water interface and finally pore formation after oligomerization of monomers. This toxin shows hemolytic activities. This Stichodactyla mertensii (Merten's carpet sea anemone) protein is Cytolysin SmT-1.